The chain runs to 319 residues: Ferrochelatase (319 aa).

2 residues coordinate Fe cation: histidine 193 and glutamate 274.

It belongs to the ferrochelatase family.

The protein resides in the cytoplasm. It catalyses the reaction heme b + 2 H(+) = protoporphyrin IX + Fe(2+). It functions in the pathway porphyrin-containing compound metabolism; protoheme biosynthesis; protoheme from protoporphyrin-IX: step 1/1. In terms of biological role, catalyzes the ferrous insertion into protoporphyrin IX. The polypeptide is Ferrochelatase (Erwinia tasmaniensis (strain DSM 17950 / CFBP 7177 / CIP 109463 / NCPPB 4357 / Et1/99)).